The primary structure comprises 240 residues: uncharacterized protein (240 aa).

Residues 93-160 (QEASGCTVGE…AGGGAAASGQ (68 aa)) are disordered. Low complexity-rich tracts occupy residues 110–119 (AQPSQPAQGG) and 129–150 (GGAE…PAEN).

This is an uncharacterized protein from Streptomyces viridochromogenes.